The following is a 71-amino-acid chain: Disintegrin simusmin (71 aa).

The Disintegrin domain occupies 1 to 71; it reads AGEECDCGSP…SADCPRNPFH (71 aa). Intrachain disulfides connect C5–C20, C7–C15, C14–C37, C28–C34, C33–C58, and C46–C65. Positions 50-52 match the Cell attachment site motif; that stretch reads RGD.

Belongs to the venom metalloproteinase (M12B) family. P-II subfamily. P-IIa sub-subfamily. Monomer. In terms of tissue distribution, expressed by the venom gland.

It is found in the secreted. Functionally, inhibits ADP- (IC(50)=56 nM) and collagen-induced (IC(50)=49 nM) aggregation of human platelets. In vitro, inhibits adhesion of endothelial cells to vitronectin, type-I collagen and, to a lower degree, fibronectin and laminin. The protein is Disintegrin simusmin of Crotalus simus (Central American rattlesnake).